The following is a 196-amino-acid chain: Chromophore lyase CpcT/CpeT (196 aa).

Belongs to the CpcT/CpeT biliprotein lyase family.

In terms of biological role, covalently attaches a chromophore to Cys residue(s) of phycobiliproteins. This is Chromophore lyase CpcT/CpeT from Synechocystis sp. (strain ATCC 27184 / PCC 6803 / Kazusa).